The chain runs to 104 residues: ATP-dependent Clp protease adapter protein ClpS (104 aa).

The protein belongs to the ClpS family. As to quaternary structure, binds to the N-terminal domain of the chaperone ClpA.

Involved in the modulation of the specificity of the ClpAP-mediated ATP-dependent protein degradation. In Burkholderia mallei (strain NCTC 10247), this protein is ATP-dependent Clp protease adapter protein ClpS.